The following is a 533-amino-acid chain: Heterogeneous nuclear ribonucleoprotein Q (533 aa).

Position 2 is an N-acetylalanine (A2). Residue S69 is modified to Phosphoserine. 3 consecutive RRM domains span residues 72–151 (TEIF…ISVA), 153–235 (NRLF…WADP), and 248–318 (KVLF…FAKP). K78 is covalently cross-linked (Glycyl lysine isopeptide (Lys-Gly) (interchain with G-Cter in SUMO2)). K131 is subject to N6-acetyllysine. Residue K273 is modified to N6-acetyllysine. The residue at position 283 (Y283) is a Phosphotyrosine. Residues 310–471 (NIEIVFAKPP…GARGGRGGNV (162 aa)) are interaction with APOBEC1. Residue R354 is modified to Asymmetric dimethylarginine; by PRMT1; alternate. An Omega-N-methylarginine; by PRMT1; alternate modification is found at R354. 6 consecutive repeat copies span residues 358-360 (RGG), 361-363 (RGG), 370-374 (YYGYE), 379-382 (YYGY), 388-390 (RGG), and 395-398 (YYGY). An 8 X 3 AA repeats of R-G-G region spans residues 358–469 (RGGRGGYGYP…VRGARGGRGG (112 aa)). The tract at residues 370-398 (YYGYEDYYDYYGYDYHNYRGGYEDPYYGY) is 3 X 4 AA repeats of Y-Y-G-Y. At R406 the chain carries Omega-N-methylarginine; by PRMT1. The tract at residues 407 to 533 (GRGGRGARGA…YQDTFGQQWK (127 aa)) is disordered. One copy of the 1-4 repeat lies at 408 to 410 (RGG). A compositionally biased stretch (low complexity) spans 414 to 432 (RGAAPSRGRGAAPPRGRAG). R420 carries the asymmetric dimethylarginine; by PRMT1 modification. R428 is subject to Asymmetric dimethylarginine; by PRMT1; alternate. Residue R428 is modified to Omega-N-methylarginine; by PRMT1; alternate. Residues 428–459 (RGRAGYSQRGGPGSARGVRGARGGAQQQRGRG) form an interaction with SMN region. An Asymmetric dimethylarginine; alternate modification is found at R436. R436 carries the omega-N-methylarginine; alternate modification. A 1-5 repeat occupies 436-438 (RGG). Asymmetric dimethylarginine; by PRMT1; alternate is present on residues R446 and R449. R446 and R449 each carry omega-N-methylarginine; by PRMT1; alternate. 3 tandem repeats follow at residues 449–451 (RGG), 464–466 (RGG), and 467–469 (RGG). Gly residues predominate over residues 460 to 472 (VRGARGGRGGNVG). The Bipartite nuclear localization signal signature appears at 474–488 (KRKADGYNQPDSKRR). Positions 490-505 (TNNQNWGSQPIAQQPL) are enriched in polar residues. S497 carries the phosphoserine modification. Residue K517 forms a Glycyl lysine isopeptide (Lys-Gly) (interchain with G-Cter in SUMO2) linkage.

In terms of assembly, identified in a histone pre-mRNA complex, at least composed of ERI1, LSM11, SLBP, SNRPB, SYNCRIP and YBX1. Identified in the spliceosome C complex. Component of the coding region determinant (CRD)-mediated complex, composed of DHX9, HNRNPU, IGF2BP1, SYNCRIP and YBX1. Identified in a mRNP complex, at least composed of DHX9, DDX3X, ELAVL1, HNRNPU, IGF2BP1, ILF3, PABPC1, PCBP2, PTBP2, STAU1, STAU2, SYNCRIP and YBX1. Identified in a mRNP granule complex, at least composed of ACTB, ACTN4, DHX9, ERG, HNRNPA1, HNRNPA2B1, HNRNPAB, HNRNPD, HNRNPL, HNRNPR, HNRNPU, HSPA1, HSPA8, IGF2BP1, ILF2, ILF3, NCBP1, NCL, PABPC1, PABPC4, PABPN1, RPLP0, RPS3, RPS3A, RPS4X, RPS8, RPS9, SYNCRIP, YBX1 and untranslated mRNAs. Component of the APOB mRNA editosome. Interacts with APOBEC1 and A1CF. Part of a complex associated with the FOS mCRD domain and consisting of PABPC1, PAIP1, CSDE1/UNR, HNRPD and SYNCRIP. Interacts with HNRPR, SMN, POLR2A hyperphosphorylated C-terminal domain, minute virus of mice (MVM) NS1 protein and through its C-terminal domain with SYT7, SYT8 and SYT9. The non-phosphorylated and phosphorylated forms are colocalized with PAIP1 in polysomes. Interacts with GTPBP1. Interacts with HABP4. Post-translationally, phosphorylated on tyrosine. The membrane-bound form found in microsomes is phosphorylated in vitro by insulin receptor tyrosine kinase (INSR). Phosphorylation is inhibited upon binding to RNA, whereas the cytoplasmic form is poorly phosphorylated.

The protein localises to the nucleus. The protein resides in the nucleoplasm. It localises to the cytoplasm. Its subcellular location is the microsome. In terms of biological role, heterogenous nuclear ribonucleoprotein (hnRNP) implicated in mRNA processing mechanisms. Component of the CRD-mediated complex that promotes MYC mRNA stability. Is associated in vitro with pre-mRNA, splicing intermediates and mature mRNA protein complexes. Binds to apoB mRNA AU-rich sequences. Part of the APOB mRNA editosome complex and may modulate the postranscriptional C to U RNA-editing of the APOB mRNA through either by binding to A1CF (APOBEC1 complementation factor), to APOBEC1 or to RNA itself. May be involved in translationally coupled mRNA turnover. Implicated with other RNA-binding proteins in the cytoplasmic deadenylation/translational and decay interplay of the FOS mRNA mediated by the major coding-region determinant of instability (mCRD) domain. Interacts in vitro preferentially with poly(A) and poly(U) RNA sequences. May be involved in cytoplasmic vesicle-based mRNA transport through interaction with synaptotagmins. The protein is Heterogeneous nuclear ribonucleoprotein Q (Syncrip) of Rattus norvegicus (Rat).